The sequence spans 259 residues: Dihydroorotate dehydrogenase B (NAD(+)), electron transfer subunit (259 aa).

Positions 3–103 (KKQGRLTIVK…LGPLGQGFPL (101 aa)) constitute an FAD-binding FR-type domain. FAD contacts are provided by residues 54–57 (RPIS), 71–73 (IYR), and 78–79 (GT). The [2Fe-2S] cluster site is built by Cys222, Cys227, Cys230, and Cys246.

This sequence belongs to the PyrK family. Heterotetramer of 2 PyrK and 2 PyrD type B subunits. [2Fe-2S] cluster serves as cofactor. Requires FAD as cofactor.

It participates in pyrimidine metabolism; UMP biosynthesis via de novo pathway; orotate from (S)-dihydroorotate (NAD(+) route): step 1/1. Functionally, responsible for channeling the electrons from the oxidation of dihydroorotate from the FMN redox center in the PyrD type B subunit to the ultimate electron acceptor NAD(+). The chain is Dihydroorotate dehydrogenase B (NAD(+)), electron transfer subunit from Shouchella clausii (strain KSM-K16) (Alkalihalobacillus clausii).